Here is a 547-residue protein sequence, read N- to C-terminus: GMP synthase [glutamine-hydrolyzing] (547 aa).

The Glutamine amidotransferase type-1 domain maps to 12–210; that stretch reads KILILDFGSQ…VLDIAGAKPD (199 aa). Catalysis depends on Cys89, which acts as the Nucleophile. Active-site residues include His184 and Glu186. In terms of domain architecture, GMPS ATP-PPase spans 211–403; that stretch reads WIMRDHIEEA…LGLPAEMVYR (193 aa). 238 to 244 provides a ligand contact to ATP; the sequence is SGGVDSS.

In terms of assembly, homodimer.

It carries out the reaction XMP + L-glutamine + ATP + H2O = GMP + L-glutamate + AMP + diphosphate + 2 H(+). Its pathway is purine metabolism; GMP biosynthesis; GMP from XMP (L-Gln route): step 1/1. Its function is as follows. Catalyzes the synthesis of GMP from XMP. This is GMP synthase [glutamine-hydrolyzing] from Burkholderia pseudomallei (strain 1710b).